The sequence spans 465 residues: Cyclin-A1 (465 aa).

This sequence belongs to the cyclin family. Cyclin AB subfamily. As to quaternary structure, interacts with the CDK2 and the CDC2 protein kinases to form a serine/threonine kinase holoenzyme complex. The cyclin subunit imparts substrate specificity to the complex. Does not bind CDK4 and CDK5 (in vitro). The cyclin A1-CDK2 complex interacts with transcription factor E2F-1 and RB proteins. Found in a complex with CDK2, CABLES1 and CCNE1. Interacts with INCA1. Interacts with KLHDC9. Polyubiquitinated via 'Lys-11'-linked ubiquitin by the anaphase-promoting complex (APC/C), leading to its degradation by the proteasome. Deubiquitinated and stabilized by USP37 enables entry into S phase. Ubiquitinated during the G1 phase by the SCF(FBXO31) complex, leading to its proteasomal degradation. Very high levels in testis and very low levels in brain. Also found in myeloid leukemia cell lines.

The protein localises to the nucleus. Its function is as follows. May be involved in the control of the cell cycle at the G1/S (start) and G2/M (mitosis) transitions. May primarily function in the control of the germline meiotic cell cycle and additionally in the control of mitotic cell cycle in some somatic cells. The polypeptide is Cyclin-A1 (CCNA1) (Homo sapiens (Human)).